We begin with the raw amino-acid sequence, 263 residues long: Phosphatidylglycerol--prolipoprotein diacylglyceryl transferase (263 aa).

The next 3 membrane-spanning stretches (helical) occupy residues 17-37 (LSVR…IFLG), 56-76 (LLFY…VLFY), and 88-108 (IFAV…VLVA). Arg-139 is an a 1,2-diacyl-sn-glycero-3-phospho-(1'-sn-glycerol) binding site. The next 2 helical transmembrane spans lie at 176-196 (QLYH…WFTA) and 236-256 (ISMG…MVVF).

It belongs to the Lgt family.

Its subcellular location is the cell inner membrane. It carries out the reaction L-cysteinyl-[prolipoprotein] + a 1,2-diacyl-sn-glycero-3-phospho-(1'-sn-glycerol) = an S-1,2-diacyl-sn-glyceryl-L-cysteinyl-[prolipoprotein] + sn-glycerol 1-phosphate + H(+). It functions in the pathway protein modification; lipoprotein biosynthesis (diacylglyceryl transfer). Functionally, catalyzes the transfer of the diacylglyceryl group from phosphatidylglycerol to the sulfhydryl group of the N-terminal cysteine of a prolipoprotein, the first step in the formation of mature lipoproteins. The protein is Phosphatidylglycerol--prolipoprotein diacylglyceryl transferase of Dechloromonas aromatica (strain RCB).